A 424-amino-acid polypeptide reads, in one-letter code: UPF0761 membrane protein Smal_0716 (424 aa).

Transmembrane regions (helical) follow at residues 48–68, 101–121, 144–164, 181–201, 216–236, and 251–271; these read VFAL…FPVF, SAGQ…LITL, FLVY…SLAV, WLAD…CITL, AVPG…GIGA, and VAFV…VLLG.

The protein belongs to the UPF0761 family.

It localises to the cell inner membrane. The protein is UPF0761 membrane protein Smal_0716 of Stenotrophomonas maltophilia (strain R551-3).